The primary structure comprises 316 residues: Probable cell division protein WhiA (316 aa).

The H-T-H motif DNA-binding region spans 280-313 (SLKELGEMLEPPVGKSGVNHRLRKIEKIAEELRT).

This sequence belongs to the WhiA family.

In terms of biological role, involved in cell division and chromosome segregation. The protein is Probable cell division protein WhiA of Clostridium perfringens (strain 13 / Type A).